The chain runs to 987 residues: Valine--tRNA ligase (987 aa).

The short motif at 45–55 (PNVTGSLHMGH) is the 'HIGH' region element. The 'KMSKS' region motif lies at 634 to 638 (KMSKS). Lys637 provides a ligand contact to ATP. Residues 917-985 (VIDIGAEKAR…LSAALARLSE (69 aa)) are a coiled coil.

The protein belongs to the class-I aminoacyl-tRNA synthetase family. ValS type 1 subfamily. As to quaternary structure, monomer.

It localises to the cytoplasm. It catalyses the reaction tRNA(Val) + L-valine + ATP = L-valyl-tRNA(Val) + AMP + diphosphate. Functionally, catalyzes the attachment of valine to tRNA(Val). As ValRS can inadvertently accommodate and process structurally similar amino acids such as threonine, to avoid such errors, it has a 'posttransfer' editing activity that hydrolyzes mischarged Thr-tRNA(Val) in a tRNA-dependent manner. The sequence is that of Valine--tRNA ligase from Cereibacter sphaeroides (strain ATCC 17023 / DSM 158 / JCM 6121 / CCUG 31486 / LMG 2827 / NBRC 12203 / NCIMB 8253 / ATH 2.4.1.) (Rhodobacter sphaeroides).